The chain runs to 425 residues: Polyribonucleotide 5'-hydroxyl-kinase Clp1 (425 aa).

ATP is bound by residues glutamate 22, lysine 62, and 124 to 129 (DVGKST).

Belongs to the Clp1 family. Clp1 subfamily. As to quaternary structure, component of the tRNA splicing endonuclease complex, composed of CLP1, TSEN2, TSEN15, TSEN34 and TSEN54. Component of pre-mRNA cleavage complex II (CF-II). Also associates with numerous components of the pre-mRNA cleavage complex I (CF-I/CFIm), including NUDT21, CPSF2, CPSF3, CPSF6 and CPSF7. Interacts with CSTF2 and SYMPK. Mg(2+) is required as a cofactor. Mn(2+) serves as cofactor. It depends on Ni(2+) as a cofactor.

The protein localises to the nucleus. It carries out the reaction a 5'-end dephospho-2'-deoxyribonucleoside-DNA + ATP = a 5'-end 5'-phospho-2'-deoxyribonucleoside-DNA + ADP + H(+). The enzyme catalyses a 5'-end dephospho-ribonucleoside-RNA + ATP = a 5'-end 5'-phospho-ribonucleoside-RNA + ADP + H(+). Polynucleotide kinase that can phosphorylate the 5'-hydroxyl groups of double-stranded RNA (dsRNA), single-stranded RNA (ssRNA), double-stranded DNA (dsDNA) and double-stranded DNA:RNA hybrids. dsRNA is phosphorylated more efficiently than dsDNA, and the RNA component of a DNA:RNA hybrid is phosphorylated more efficiently than the DNA component. Plays a key role in both tRNA splicing and mRNA 3'-end formation. Component of the tRNA splicing endonuclease complex: phosphorylates the 5'-terminus of the tRNA 3'-exon during tRNA splicing; this phosphorylation event is a prerequisite for the subsequent ligation of the two exon halves and the production of a mature tRNA. Its role in tRNA splicing and maturation is required for cerebellar development. Component of the pre-mRNA cleavage complex II (CF-II), which seems to be required for mRNA 3'-end formation. Also phosphorylates the 5'-terminus of exogenously introduced short interfering RNAs (siRNAs), which is a necessary prerequisite for their incorporation into the RNA-induced silencing complex (RISC). However, endogenous siRNAs and microRNAs (miRNAs) that are produced by the cleavage of dsRNA precursors by DICER1 already contain a 5'-phosphate group, so this protein may be dispensible for normal RNA-mediated gene silencing. This is Polyribonucleotide 5'-hydroxyl-kinase Clp1 from Bos taurus (Bovine).